A 365-amino-acid chain; its full sequence is 3-isopropylmalate dehydrogenase (365 aa).

80–91 (GPKWGTGAVRPE) is an NAD(+) binding site. Residues arginine 98, arginine 108, arginine 137, and aspartate 226 each contribute to the substrate site. Mg(2+)-binding residues include aspartate 226, aspartate 251, and aspartate 255. Position 290–301 (290–301 (GSAPDLPKGKVN)) interacts with NAD(+).

Belongs to the isocitrate and isopropylmalate dehydrogenases family. Homodimer. It depends on Mg(2+) as a cofactor. Mn(2+) is required as a cofactor.

It is found in the cytoplasm. The catalysed reaction is (2R,3S)-3-isopropylmalate + NAD(+) = 4-methyl-2-oxopentanoate + CO2 + NADH. The protein operates within amino-acid biosynthesis; L-leucine biosynthesis; L-leucine from 3-methyl-2-oxobutanoate: step 3/4. Its function is as follows. Catalyzes the oxidation of 3-carboxy-2-hydroxy-4-methylpentanoate (3-isopropylmalate) to 3-carboxy-4-methyl-2-oxopentanoate. The product decarboxylates to 4-methyl-2 oxopentanoate. The sequence is that of 3-isopropylmalate dehydrogenase (LEU2) from Candida glabrata (strain ATCC 2001 / BCRC 20586 / JCM 3761 / NBRC 0622 / NRRL Y-65 / CBS 138) (Yeast).